The following is a 697-amino-acid chain: Elongation factor G (697 aa).

The tr-type G domain maps to 8–283 (ERMRNIGIAA…AVVDYLPSPL (276 aa)). Residues 17 to 24 (AHIDAGKT), 81 to 85 (DTPGH), and 135 to 138 (NKMD) each bind GTP.

The protein belongs to the TRAFAC class translation factor GTPase superfamily. Classic translation factor GTPase family. EF-G/EF-2 subfamily.

The protein resides in the cytoplasm. Catalyzes the GTP-dependent ribosomal translocation step during translation elongation. During this step, the ribosome changes from the pre-translocational (PRE) to the post-translocational (POST) state as the newly formed A-site-bound peptidyl-tRNA and P-site-bound deacylated tRNA move to the P and E sites, respectively. Catalyzes the coordinated movement of the two tRNA molecules, the mRNA and conformational changes in the ribosome. This chain is Elongation factor G, found in Solibacter usitatus (strain Ellin6076).